The sequence spans 263 residues: Putative TATA-binding protein pB263R (263 aa).

This sequence belongs to the asfivirus B263R family.

In terms of biological role, putative TATA-binding protein. The protein is Putative TATA-binding protein pB263R of Ornithodoros (relapsing fever ticks).